A 195-amino-acid chain; its full sequence is Imidazoleglycerol-phosphate dehydratase (195 aa).

The protein belongs to the imidazoleglycerol-phosphate dehydratase family.

The protein localises to the cytoplasm. The catalysed reaction is D-erythro-1-(imidazol-4-yl)glycerol 3-phosphate = 3-(imidazol-4-yl)-2-oxopropyl phosphate + H2O. It participates in amino-acid biosynthesis; L-histidine biosynthesis; L-histidine from 5-phospho-alpha-D-ribose 1-diphosphate: step 6/9. The chain is Imidazoleglycerol-phosphate dehydratase from Alkaliphilus metalliredigens (strain QYMF).